A 476-amino-acid polypeptide reads, in one-letter code: Replication factor C large subunit (476 aa).

Residue 50-57 coordinates ATP; it reads GPPGVGKT. The segment at 447–476 is disordered; that stretch reads YEKGTKKGKGEKRRKGSDEGSGLLKWLKKD. A compositionally biased stretch (basic residues) spans 452-461; that stretch reads KKGKGEKRRK.

This sequence belongs to the activator 1 small subunits family. RfcL subfamily. As to quaternary structure, heteromultimer composed of small subunits (RfcS) and large subunits (RfcL).

Functionally, part of the RFC clamp loader complex which loads the PCNA sliding clamp onto DNA. The polypeptide is Replication factor C large subunit (Ignicoccus hospitalis (strain KIN4/I / DSM 18386 / JCM 14125)).